Here is a 315-residue protein sequence, read N- to C-terminus: tRNA dimethylallyltransferase (315 aa).

Position 18–25 (18–25) interacts with ATP; the sequence is GPTASGKT. 20 to 25 provides a ligand contact to substrate; that stretch reads TASGKT. Interaction with substrate tRNA regions lie at residues 43–46, 167–171, and 248–253; these read DSAL, QRLSR, and RCVGYR.

The protein belongs to the IPP transferase family. In terms of assembly, monomer. The cofactor is Mg(2+).

It catalyses the reaction adenosine(37) in tRNA + dimethylallyl diphosphate = N(6)-dimethylallyladenosine(37) in tRNA + diphosphate. Functionally, catalyzes the transfer of a dimethylallyl group onto the adenine at position 37 in tRNAs that read codons beginning with uridine, leading to the formation of N6-(dimethylallyl)adenosine (i(6)A). In Pseudoalteromonas atlantica (strain T6c / ATCC BAA-1087), this protein is tRNA dimethylallyltransferase.